Consider the following 188-residue polypeptide: MRTVVDYGAAIAFGVAYFVTKDFQKATWVLVAASAAALAIGYAVERRLAMLPLFFGGMALVFGTLGLIFGSDVFVKIKVTVINLALASFLVGGVLLKRQPLKVIMGEALHLPDAAWRTLTLRYGAYFAFVAIINEVVRNTQDTDTWVKFRLALLPVALVFVATQLPFMMKHMAKGDDAKAVEPPDAGF.

5 helical membrane-spanning segments follow: residues 23–43 (FQKATWVLVAASAAALAIGYA), 49–69 (AMLPLFFGGMALVFGTLGLIF), 73–93 (VFVKIKVTVINLALASFLVGG), 116–133 (WRTLTLRYGAYFAFVAII), and 149–169 (FRLALLPVALVFVATQLPFMM).

Belongs to the YciB family.

The protein localises to the cell inner membrane. Its function is as follows. Plays a role in cell envelope biogenesis, maintenance of cell envelope integrity and membrane homeostasis. The sequence is that of Inner membrane-spanning protein YciB from Caulobacter vibrioides (strain ATCC 19089 / CIP 103742 / CB 15) (Caulobacter crescentus).